Here is a 186-residue protein sequence, read N- to C-terminus: Interferon beta (186 aa).

Residues 1-21 (MTYRWILPMALLLCFSTTALS) form the signal peptide. Tyr24 is modified (phosphotyrosine). A disulfide bridge connects residues Cys52 and Cys161. N-linked (GlcNAc...) asparagine glycosylation is found at Asn101 and Asn136.

This sequence belongs to the alpha/beta interferon family. Monomer.

It localises to the secreted. Functionally, type I interferon cytokine that plays a key role in the innate immune response to infection, developing tumors and other inflammatory stimuli. Signals via binding to high-affinity (IFNAR2) and low-affinity (IFNAR1) heterodimeric receptor, activating the canonical Jak-STAT signaling pathway resulting in transcriptional activation or repression of interferon-regulated genes that encode the effectors of the interferon response, such as antiviral proteins, regulators of cell proliferation and differentiation, and immunoregulatory proteins. Signals mostly via binding to a IFNAR1-IFNAR2 heterodimeric receptor, but can also function with IFNAR1 alone and independently of Jak-STAT pathways. Elicits a wide variety of responses, including antiviral and antibacterial activities, and can regulate the development of B-cells, myelopoiesis and lipopolysaccharide (LPS)-inducible production of tumor necrosis factor. Plays a role in neuronal homeostasis by regulating dopamine turnover and protecting dopaminergic neurons: acts by promoting neuronal autophagy and alpha-synuclein clearance, thereby preventing dopaminergic neuron loss. IFNB1 is more potent than interferon-alpha (IFN-alpha) in inducing the apoptotic and antiproliferative pathways required for control of tumor cell growth. The chain is Interferon beta (IFNB1) from Equus caballus (Horse).